Here is a 213-residue protein sequence, read N- to C-terminus: Imidazoleglycerol-phosphate dehydratase (213 aa).

This sequence belongs to the imidazoleglycerol-phosphate dehydratase family.

The protein localises to the cytoplasm. It carries out the reaction D-erythro-1-(imidazol-4-yl)glycerol 3-phosphate = 3-(imidazol-4-yl)-2-oxopropyl phosphate + H2O. The protein operates within amino-acid biosynthesis; L-histidine biosynthesis; L-histidine from 5-phospho-alpha-D-ribose 1-diphosphate: step 6/9. The polypeptide is Imidazoleglycerol-phosphate dehydratase (Trichodesmium erythraeum (strain IMS101)).